Consider the following 85-residue polypeptide: Toxin BmKT (85 aa).

Positions Met-1 to Ser-19 are cleaved as a signal peptide. The region spanning Arg-21 to Asn-83 is the LCN-type CS-alpha/beta domain. 4 disulfides stabilise this stretch: Cys-31–Cys-82, Cys-35–Cys-55, Cys-41–Cys-65, and Cys-45–Cys-67.

This sequence belongs to the long (4 C-C) scorpion toxin superfamily. Sodium channel inhibitor family. Alpha subfamily. Expressed by the venom gland.

The protein resides in the secreted. Its function is as follows. Binds to sodium channels (Nav) and inhibits the inactivation of the activated channels, thereby blocking neuronal transmission. Tested on mice, has antitumor effect and strong inhibitory effect on pain. This is Toxin BmKT from Olivierus martensii (Manchurian scorpion).